The following is a 232-amino-acid chain: Orotidine 5'-phosphate decarboxylase (232 aa).

Residues Asp-13, Lys-35, 62–71, Thr-122, Arg-182, Gln-191, Gly-211, and Arg-212 contribute to the substrate site; that span reads DLKFHDIPNT. The active-site Proton donor is the Lys-64.

The protein belongs to the OMP decarboxylase family. Type 1 subfamily. In terms of assembly, homodimer.

It catalyses the reaction orotidine 5'-phosphate + H(+) = UMP + CO2. Its pathway is pyrimidine metabolism; UMP biosynthesis via de novo pathway; UMP from orotate: step 2/2. Its function is as follows. Catalyzes the decarboxylation of orotidine 5'-monophosphate (OMP) to uridine 5'-monophosphate (UMP). This chain is Orotidine 5'-phosphate decarboxylase, found in Pseudomonas syringae pv. tomato (strain ATCC BAA-871 / DC3000).